Reading from the N-terminus, the 248-residue chain is Clathrin light chain A (248 aa).

The segment at 1 to 92 (MAELDPFGAP…YYQESNGPTD (92 aa)) is disordered. Positions 13 to 25 (APGGPALGNGVAG) are enriched in gly residues. Over residues 61 to 71 (GPQPHGEPPGG) the composition is skewed to pro residues. Residues 100 to 162 (VDRLQSEPES…QLQKTKANNR (63 aa)) are involved in binding clathrin heavy chain. 2 positions are modified to phosphoserine: S105 and S206. Position 223 is an N6-acetyllysine (K223). Residue S236 is modified to Phosphoserine. K242 bears the N6-acetyllysine mark.

It belongs to the clathrin light chain family. In terms of assembly, clathrin coats are formed from molecules containing 3 heavy chains and 3 light chains. Interacts with CALY; the interaction stimulates clathrin self-assembly and clathrin-mediated endocytosis. Interacts with CKAP5 and TACC3 forming the TACC3/ch-TOG/clathrin complex located at spindle inter-microtubules bridges; the complex implicates clathrin triskelions.

The protein localises to the cytoplasmic vesicle membrane. It localises to the membrane. Its subcellular location is the coated pit. The protein resides in the cytoplasm. It is found in the cytoskeleton. The protein localises to the spindle. In terms of biological role, clathrin is the major protein of the polyhedral coat of coated pits and vesicles. Acts as a component of the TACC3/ch-TOG/clathrin complex proposed to contribute to stabilization of kinetochore fibers of the mitotic spindle by acting as inter-microtubule bridge. The polypeptide is Clathrin light chain A (CLTA) (Homo sapiens (Human)).